Reading from the N-terminus, the 365-residue chain is tRNA/tmRNA (uracil-C(5))-methyltransferase (365 aa).

Residues Q189, Y217, N222, E238, and D298 each coordinate S-adenosyl-L-methionine. The Nucleophile role is filled by C323. Catalysis depends on E357, which acts as the Proton acceptor.

The protein belongs to the class I-like SAM-binding methyltransferase superfamily. RNA M5U methyltransferase family. TrmA subfamily.

It catalyses the reaction uridine(54) in tRNA + S-adenosyl-L-methionine = 5-methyluridine(54) in tRNA + S-adenosyl-L-homocysteine + H(+). The catalysed reaction is uridine(341) in tmRNA + S-adenosyl-L-methionine = 5-methyluridine(341) in tmRNA + S-adenosyl-L-homocysteine + H(+). In terms of biological role, dual-specificity methyltransferase that catalyzes the formation of 5-methyluridine at position 54 (m5U54) in all tRNAs, and that of position 341 (m5U341) in tmRNA (transfer-mRNA). In Shewanella woodyi (strain ATCC 51908 / MS32), this protein is tRNA/tmRNA (uracil-C(5))-methyltransferase.